The primary structure comprises 168 residues: DAZ-associated protein 2 (168 aa).

The segment covering 1 to 13 (MNSKGQYPTQPTY) has biased composition (low complexity). The tract at residues 1-25 (MNSKGQYPTQPTYPVQPPGNPVYPQ) is disordered. A PPAY motif is present at residues 39–42 (PPAY). S77 bears the Phosphoserine mark.

Interacts with SOX6. Interacts with DAZ1 and DAZL. Interacts with IL17RB. May interact with FAM168B. Interacts with INCA1. Interacts with EIF4G1 and EIF4G2. Interacts (via PPAY motif) with NEDD4 (via WW domains). Interacts with transcription factor TCF4; the interaction results in localization of DAZAP2 to the nucleus. Interacts with transcription factors TCF7 and TCF7L1. Interacts with transcription factor LEF1. Interacts with serine/threonine-protein kinase HIPK2; the interaction results in phosphorylation of DAZAP2 which causes localization of DAZAP2 to the nucleus, reduces interaction of DAZAP2 with HIPK2 and prevents DAZAP2-dependent degradation of HIPK2. Interacts with ubiquitin ligase SIAH1; the interaction is decreased following phosphorylation of DAZAP2 by HIPK2. Interacts with TP53; the interaction is triggered by DNA damage. Ubiquitinated by SMURF2, leading to proteasomal degradation. Ubiquitinated by NEDD4, leading to proteasomal degradation. In terms of processing, following DNA damage, phosphorylated by HIPK2 which promotes DAZAP2 localization to the nucleus, reduces interaction of DAZAP2 with HIPK2 and SIAH1, and prevents DAZAP2-dependent ubiquitination of HIPK2 by E3 ubiquitin-protein ligase SIAH1 and subsequent HIPK2 proteasomal degradation.

The protein localises to the cytoplasm. Its subcellular location is the nucleus. It localises to the nucleus speckle. It is found in the nuclear body. The protein resides in the stress granule. Functionally, in unstressed cells, promotes SIAH1-mediated polyubiquitination and degradation of the serine/threonine-protein kinase HIPK2, probably by acting as a loading factor that potentiates complex formation between HIPK2 and ubiquitin ligase SIAH1. In response to DNA damage, localizes to the nucleus following phosphorylation by HIPK2 and modulates the expression of a subset of TP53/p53 target genes by binding to TP53 at target gene promoters. This limits the expression of a number of cell death-mediating TP53 target genes, reducing DNA damage-induced cell death. Enhances the binding of transcription factor TCF7L2/TCF4, a Wnt signaling pathway effector, to the promoters of target genes. Plays a role in stress granule formation. The protein is DAZ-associated protein 2 of Macaca fascicularis (Crab-eating macaque).